The following is a 131-amino-acid chain: Small ribosomal subunit protein uS11 (131 aa).

The protein belongs to the universal ribosomal protein uS11 family. In terms of assembly, part of the 30S ribosomal subunit. Interacts with proteins S7 and S18. Binds to IF-3.

Its function is as follows. Located on the platform of the 30S subunit, it bridges several disparate RNA helices of the 16S rRNA. Forms part of the Shine-Dalgarno cleft in the 70S ribosome. The chain is Small ribosomal subunit protein uS11 from Clostridium acetobutylicum (strain ATCC 824 / DSM 792 / JCM 1419 / IAM 19013 / LMG 5710 / NBRC 13948 / NRRL B-527 / VKM B-1787 / 2291 / W).